Reading from the N-terminus, the 159-residue chain is Phosphopantetheine adenylyltransferase (159 aa).

S9 contributes to the substrate binding site. ATP-binding positions include 9–10 (SF) and H17. Substrate-binding residues include K41, L74, and K88. ATP contacts are provided by residues 89–91 (GLR), E99, and 123–129 (YLHLSST).

Belongs to the bacterial CoaD family. In terms of assembly, homohexamer. Mg(2+) serves as cofactor.

Its subcellular location is the cytoplasm. It catalyses the reaction (R)-4'-phosphopantetheine + ATP + H(+) = 3'-dephospho-CoA + diphosphate. It functions in the pathway cofactor biosynthesis; coenzyme A biosynthesis; CoA from (R)-pantothenate: step 4/5. Reversibly transfers an adenylyl group from ATP to 4'-phosphopantetheine, yielding dephospho-CoA (dPCoA) and pyrophosphate. The polypeptide is Phosphopantetheine adenylyltransferase (Arthrobacter sp. (strain FB24)).